A 357-amino-acid chain; its full sequence is Quinolinate synthase (357 aa).

2 residues coordinate iminosuccinate: His50 and Ser71. Cys116 is a binding site for [4Fe-4S] cluster. Iminosuccinate-binding positions include 142–144 (YAN) and Ser159. Cys203 provides a ligand contact to [4Fe-4S] cluster. Iminosuccinate-binding positions include 229 to 231 (HPE) and Thr246. Cys300 is a binding site for [4Fe-4S] cluster.

This sequence belongs to the quinolinate synthase family. Type 1 subfamily. It depends on [4Fe-4S] cluster as a cofactor.

The protein localises to the cytoplasm. The catalysed reaction is iminosuccinate + dihydroxyacetone phosphate = quinolinate + phosphate + 2 H2O + H(+). Its pathway is cofactor biosynthesis; NAD(+) biosynthesis; quinolinate from iminoaspartate: step 1/1. Its function is as follows. Catalyzes the condensation of iminoaspartate with dihydroxyacetone phosphate to form quinolinate. This is Quinolinate synthase from Shewanella oneidensis (strain ATCC 700550 / JCM 31522 / CIP 106686 / LMG 19005 / NCIMB 14063 / MR-1).